A 256-amino-acid chain; its full sequence is Imidazole glycerol phosphate synthase subunit HisF (256 aa).

Catalysis depends on residues aspartate 12 and aspartate 131.

This sequence belongs to the HisA/HisF family. In terms of assembly, heterodimer of HisH and HisF.

It is found in the cytoplasm. It catalyses the reaction 5-[(5-phospho-1-deoxy-D-ribulos-1-ylimino)methylamino]-1-(5-phospho-beta-D-ribosyl)imidazole-4-carboxamide + L-glutamine = D-erythro-1-(imidazol-4-yl)glycerol 3-phosphate + 5-amino-1-(5-phospho-beta-D-ribosyl)imidazole-4-carboxamide + L-glutamate + H(+). It participates in amino-acid biosynthesis; L-histidine biosynthesis; L-histidine from 5-phospho-alpha-D-ribose 1-diphosphate: step 5/9. IGPS catalyzes the conversion of PRFAR and glutamine to IGP, AICAR and glutamate. The HisF subunit catalyzes the cyclization activity that produces IGP and AICAR from PRFAR using the ammonia provided by the HisH subunit. This chain is Imidazole glycerol phosphate synthase subunit HisF, found in Bifidobacterium longum (strain NCC 2705).